The chain runs to 367 residues: Probable peptidoglycan glycosyltransferase FtsW (367 aa).

Helical transmembrane passes span 32-52 (LIFI…PMKF), 57-77 (AFWG…PGIG), 87-107 (IPIG…MIVF), 119-139 (IHGL…CFLL), 149-169 (MVVV…FALF), 171-191 (LLFL…PWRM), 251-271 (VVGE…FVLL), 296-316 (GVVV…FGVF), and 323-343 (LPFI…FGLL).

It belongs to the SEDS family. FtsW subfamily.

The protein localises to the cell inner membrane. It catalyses the reaction [GlcNAc-(1-&gt;4)-Mur2Ac(oyl-L-Ala-gamma-D-Glu-L-Lys-D-Ala-D-Ala)](n)-di-trans,octa-cis-undecaprenyl diphosphate + beta-D-GlcNAc-(1-&gt;4)-Mur2Ac(oyl-L-Ala-gamma-D-Glu-L-Lys-D-Ala-D-Ala)-di-trans,octa-cis-undecaprenyl diphosphate = [GlcNAc-(1-&gt;4)-Mur2Ac(oyl-L-Ala-gamma-D-Glu-L-Lys-D-Ala-D-Ala)](n+1)-di-trans,octa-cis-undecaprenyl diphosphate + di-trans,octa-cis-undecaprenyl diphosphate + H(+). Its pathway is cell wall biogenesis; peptidoglycan biosynthesis. Peptidoglycan polymerase that is essential for cell division. In Taylorella equigenitalis (strain MCE9), this protein is Probable peptidoglycan glycosyltransferase FtsW.